Consider the following 441-residue polypeptide: Zinc finger protein ZIC 3 (441 aa).

The C2H2-type 1; atypical zinc-finger motif lies at 222–257; that stretch reads LSCKWLEESPMNRPQKTCDRTFSSMHELVTHMTMEH. Residues 266 to 293 form a C2H2-type 2; atypical zinc finger; that stretch reads HICYWEECPRGGKSFKAKYKLVNHIRVH. 3 C2H2-type zinc fingers span residues 299-323, 329-353, and 359-381; these read FPCPFPGCGKIFARSENLKIHKRTH, FKCEFEGCDRRFANSSDRKKHMHVH, and YICKVCDKSYTHPSSLRKHMKVH. The segment at 375-441 is disordered; that stretch reads RKHMKVHESQ…LPPNFNEWYV (67 aa). A compositionally biased stretch (low complexity) spans 383–399; that stretch reads SQGSDSSPAASSGYESA. Positions 406–429 are enriched in polar residues; it reads SANSEEPSKNSSATHQTNNSSHNT.

Belongs to the GLI C2H2-type zinc-finger protein family.

The protein localises to the nucleus. Its subcellular location is the cytoplasm. Functionally, probably acts as a transcriptional activator. May bind to the minimal GLI-consensus sequence 5'-GGGTGGTC-3'. Can determine the ectodermal cell fate and promote the earliest step of neural and neural crest development. Involved in establishing left-right asymmetry in the embryo. The protein is Zinc finger protein ZIC 3 (zic3) of Xenopus tropicalis (Western clawed frog).